We begin with the raw amino-acid sequence, 663 residues long: DNA ligase (663 aa).

Residues 31–35, 80–81, and glutamate 110 each bind NAD(+); these read DFEYD and SL. The N6-AMP-lysine intermediate role is filled by lysine 112. Positions 133, 168, 284, and 308 each coordinate NAD(+). Positions 402, 405, 420, and 425 each coordinate Zn(2+). In terms of domain architecture, BRCT spans 586 to 663; it reads IKDNRFEGKT…DEDKFRKMIE (78 aa).

Belongs to the NAD-dependent DNA ligase family. LigA subfamily. Mg(2+) serves as cofactor. The cofactor is Mn(2+).

The enzyme catalyses NAD(+) + (deoxyribonucleotide)n-3'-hydroxyl + 5'-phospho-(deoxyribonucleotide)m = (deoxyribonucleotide)n+m + AMP + beta-nicotinamide D-nucleotide.. DNA ligase that catalyzes the formation of phosphodiester linkages between 5'-phosphoryl and 3'-hydroxyl groups in double-stranded DNA using NAD as a coenzyme and as the energy source for the reaction. It is essential for DNA replication and repair of damaged DNA. The sequence is that of DNA ligase from Acetivibrio thermocellus (strain ATCC 27405 / DSM 1237 / JCM 9322 / NBRC 103400 / NCIMB 10682 / NRRL B-4536 / VPI 7372) (Clostridium thermocellum).